We begin with the raw amino-acid sequence, 1362 residues long: Leptomycin B resistance protein pmd1 (1362 aa).

Residues 1–45 are disordered; it reads MSLHSKKSTSTVKDNEHSLDLSIKSIPSNEKNFSTEKSENEASES. Residues 1–91 are Cytoplasmic-facing; that stretch reads MSLHSKKSTS…RILSYADKWD (91 aa). Basic and acidic residues predominate over residues 33–45; the sequence is FSTEKSENEASES. 6 helical membrane passes run 92-115, 138-162, 220-237, 244-264, 320-346, and 354-374; these read IMLQLAGTITGIGAGLGMPLMSLV, TVDHFCLYFIYIAIGVFGCSYIYTV, LVFFAIATFVSGFVIAFI, LILSSMFPAICGGIGLGVPFI, AIAMGLMVGWMFFVAYGVYGLAFWEGG, and LDVSKLIGCFFAVLIASYSLA. The ABC transmembrane type-1 1 domain maps to 95 to 385; sequence QLAGTITGIG…ISPKMQSFVS (291 aa). Residues 375-788 lie on the Cytoplasmic side of the membrane; sequence NISPKMQSFV…LWFIHSFVRT (414 aa). In terms of domain architecture, ABC transporter 1 spans 420–665; that stretch reads IELKNIRFVY…NGAYARLVEA (246 aa). 455 to 462 is a binding site for ATP; it reads GASGSGKS. Residues 748-768 are disordered; it reads LPPADVGELNEEPKKSKKSKK. The next 6 membrane-spanning stretches (helical) occupy residues 789–809, 835–859, 916–935, 940–957, 1022–1040, and 1054–1072; these read MIEIICLLIGILASMICGAAY, VNVFAVYWLILAIVQFFAYAISNFA, LGTFFQILTNIISVTILSLA, LGLVTLSTSPVIITAGYY, GLFFSAAQGVTFLINALTF, and IVQFYTCFIAIVFGIQQAG. The ABC transmembrane type-1 2 domain maps to 795–1083; it reads LLIGILASMI…FFGYSADVTK (289 aa). Topologically, residues 1073–1362 are cytoplasmic; sequence QFFGYSADVT…LVVEQGLNKA (290 aa). An ABC transporter 2 domain is found at 1119–1356; the sequence is IEFRQVEFSY…RGRYYELVVE (238 aa). Residue 1154 to 1161 coordinates ATP; the sequence is GSSGCGKS.

Belongs to the ABC transporter superfamily. ABCB family. Multidrug resistance exporter (TC 3.A.1.201) subfamily.

Its subcellular location is the membrane. In terms of biological role, may be a transmembrane transporter of the mating factor, namely P-factor or M-factor. Confers resistance to leptomycin B and to several other antifungal drugs. This is Leptomycin B resistance protein pmd1 (pmd1) from Schizosaccharomyces pombe (strain 972 / ATCC 24843) (Fission yeast).